The chain runs to 408 residues: D-galactonate dehydratase family member OG2516_05608 (408 aa).

D215 is a binding site for Mg(2+). H217 is a D-arabinonate binding site. E241 and E267 together coordinate Mg(2+). Residues E267, R288, H317, and E344 each coordinate D-arabinonate.

It belongs to the mandelate racemase/muconate lactonizing enzyme family. GalD subfamily.

In terms of biological role, has no detectable activity with D-mannonate and with a panel of 70 other acid sugars (in vitro), in spite of the conservation of the residues that are expected to be important for catalytic activity and cofactor binding. May have evolved a divergent function. This Oceanicola granulosus (strain ATCC BAA-861 / DSM 15982 / KCTC 12143 / HTCC2516) protein is D-galactonate dehydratase family member OG2516_05608.